The sequence spans 138 residues: Vesicle transport protein GOT1B (138 aa).

An N-acetylmethionine modification is found at M1. Residues 1–9 (MISLTDTQK) are Cytoplasmic-facing. Residues 10 to 30 (IGMGLTGFGVFFLFFGMILFF) form a helical membrane-spanning segment. Topologically, residues 31 to 32 (DK) are lumenal. A helical membrane pass occupies residues 33 to 53 (ALLAIGNVLFVAGLAFVIGLE). The Cytoplasmic segment spans residues 54–68 (RTFRFFFQKHKMKAT). A helical transmembrane segment spans residues 69-89 (GFFLGGVFVVLIGWPLIGMIF). E90 is a topological domain (lumenal). The helical transmembrane segment at 91–109 (IYGFFLLFRGFFPVVVGFI) threads the bilayer. The Cytoplasmic segment spans residues 110-138 (RRVPVLGSLLNLPGIRSFVDKVGESNNMV).

The protein belongs to the GOT1 family.

The protein localises to the golgi apparatus membrane. May be involved in fusion of ER-derived transport vesicles with the Golgi complex. In Bos taurus (Bovine), this protein is Vesicle transport protein GOT1B.